The chain runs to 288 residues: Serpentine receptor class gamma-1 (288 aa).

Helical transmembrane passes span 25–45 (LFLQLCYLTPSALFLSRVIYI), 59–79 (FYTIFLADCVTGFILVNFSIF), 118–138 (FQILVQILFVANRASCVLWPL), 148–168 (LKSILTTMAISPCLWIWTIAI), 197–217 (FSILRLTSVITIVVATTTMLI), 238–258 (VYLSVCYLLPAIAEFEYFLVL), and 268–288 (ILHGLVVICWDIQNICSTYVM).

It belongs to the nematode receptor-like protein srg family.

The protein resides in the membrane. The chain is Serpentine receptor class gamma-1 (srg-1) from Caenorhabditis elegans.